The sequence spans 171 residues: Dual specificity protein phosphatase OPG106 (171 aa).

Residues M1–M27 form a dimerization region. One can recognise a Tyrosine-protein phosphatase domain in the interval S23 to N171. The active-site Phosphocysteine intermediate is the C110.

It belongs to the protein-tyrosine phosphatase family. Non-receptor class dual specificity subfamily. As to quaternary structure, homodimer.

The protein resides in the virion. It is found in the host cytoplasm. The enzyme catalyses O-phospho-L-tyrosyl-[protein] + H2O = L-tyrosyl-[protein] + phosphate. It catalyses the reaction O-phospho-L-seryl-[protein] + H2O = L-seryl-[protein] + phosphate. In terms of biological role, serine/tyrosine phosphatase which down-regulates cellular antiviral response by dephosphorylating activated host STAT1 and blocking interferon (IFN)-stimulated innate immune responses. Dephosphorylates the OPG144 protein. The polypeptide is Dual specificity protein phosphatase OPG106 (OPG106) (Bos taurus (Bovine)).